Reading from the N-terminus, the 742-residue chain is Eukaryotic translation initiation factor 3 subunit B (742 aa).

Residues 1–10 (MAPSFDTLSE) are compositionally biased toward polar residues. A disordered region spans residues 1–20 (MAPSFDTLSEQDLHEEEEEE). One can recognise an RRM domain in the interval 40-126 (TFVVIDGLPI…HTLAVNKLMD (87 aa)). WD repeat units follow at residues 193-230 (AHWT…KLKQ), 232-290 (PHPF…RSFV), 304-345 (QPKK…LLGK), 515-558 (IEKK…EKPE), and 573-611 (VEHY…HTFA).

Belongs to the eIF-3 subunit B family. Component of the eukaryotic translation initiation factor 3 (eIF-3) complex.

The protein localises to the cytoplasm. RNA-binding component of the eukaryotic translation initiation factor 3 (eIF-3) complex, which is involved in protein synthesis of a specialized repertoire of mRNAs and, together with other initiation factors, stimulates binding of mRNA and methionyl-tRNAi to the 40S ribosome. The eIF-3 complex specifically targets and initiates translation of a subset of mRNAs involved in cell proliferation. The polypeptide is Eukaryotic translation initiation factor 3 subunit B (prt1) (Aspergillus terreus (strain NIH 2624 / FGSC A1156)).